Here is a 225-residue protein sequence, read N- to C-terminus: Uridylate kinase (225 aa).

An ATP-binding site is contributed by 7–11 (KISGS). Gly-44 provides a ligand contact to UMP. Gly-45 and Arg-49 together coordinate ATP. Residues Asp-66 and 114–120 (FQPGQST) each bind UMP. Positions 147 and 150 each coordinate ATP.

It belongs to the UMP kinase family. As to quaternary structure, homohexamer.

The protein localises to the cytoplasm. The catalysed reaction is UMP + ATP = UDP + ADP. The protein operates within pyrimidine metabolism; CTP biosynthesis via de novo pathway; UDP from UMP (UMPK route): step 1/1. With respect to regulation, inhibited by UTP. Functionally, catalyzes the reversible phosphorylation of UMP to UDP. The sequence is that of Uridylate kinase from Aeropyrum pernix (strain ATCC 700893 / DSM 11879 / JCM 9820 / NBRC 100138 / K1).